The sequence spans 287 residues: ATP synthase gamma chain (287 aa).

This sequence belongs to the ATPase gamma chain family. F-type ATPases have 2 components, CF(1) - the catalytic core - and CF(0) - the membrane proton channel. CF(1) has five subunits: alpha(3), beta(3), gamma(1), delta(1), epsilon(1). CF(0) has three main subunits: a, b and c.

The protein resides in the cell inner membrane. In terms of biological role, produces ATP from ADP in the presence of a proton gradient across the membrane. The gamma chain is believed to be important in regulating ATPase activity and the flow of protons through the CF(0) complex. This is ATP synthase gamma chain from Xylella fastidiosa (strain M12).